Consider the following 329-residue polypeptide: GTP 3',8-cyclase (329 aa).

In terms of domain architecture, Radical SAM core spans 8–234; the sequence is AFARKYYYLR…QLRQRSDGPA (227 aa). Arg-17 lines the GTP pocket. [4Fe-4S] cluster-binding residues include Cys-24 and Cys-28. S-adenosyl-L-methionine is bound at residue Tyr-30. Cys-31 is a binding site for [4Fe-4S] cluster. Arg-68 is a binding site for GTP. An S-adenosyl-L-methionine-binding site is contributed by Gly-72. Thr-99 lines the GTP pocket. Ser-123 lines the S-adenosyl-L-methionine pocket. A GTP-binding site is contributed by Lys-160. Met-194 contacts S-adenosyl-L-methionine. [4Fe-4S] cluster-binding residues include Cys-257 and Cys-260. 262–264 is a binding site for GTP; that stretch reads RLR. A [4Fe-4S] cluster-binding site is contributed by Cys-274.

This sequence belongs to the radical SAM superfamily. MoaA family. As to quaternary structure, monomer and homodimer. The cofactor is [4Fe-4S] cluster.

It carries out the reaction GTP + AH2 + S-adenosyl-L-methionine = (8S)-3',8-cyclo-7,8-dihydroguanosine 5'-triphosphate + 5'-deoxyadenosine + L-methionine + A + H(+). It participates in cofactor biosynthesis; molybdopterin biosynthesis. Functionally, catalyzes the cyclization of GTP to (8S)-3',8-cyclo-7,8-dihydroguanosine 5'-triphosphate. This is GTP 3',8-cyclase from Escherichia coli O17:K52:H18 (strain UMN026 / ExPEC).